The sequence spans 173 residues: MITQQIISSELEVLKKHIDSGDIRIPSLWQGLKPGLIIMGWMIFCPLLMSFLITQKTSETLTAVLAGGWLGLIILFIVARIRMLYFSLPEEFLKTSSVMRVISSKLKVYFIVYMGVIFLWSFLGGGIIYGFGAILVTVIMAFLIQLDIGRYQFVGVIDAINSYVKNKKLSRVK.

The protein localises to the cell inner membrane. Functionally, involved in surface exclusion. The sequence is that of Protein TraS (traS) from Escherichia coli (strain K12).